Consider the following 204-residue polypeptide: Large ribosomal subunit protein uL4 (204 aa).

Residues 49-90 (KVKGMGEVSGTTKKPYRQKGTGSARQGSLRAPQYRTGGAVHG) form a disordered region.

Belongs to the universal ribosomal protein uL4 family. Part of the 50S ribosomal subunit.

One of the primary rRNA binding proteins, this protein initially binds near the 5'-end of the 23S rRNA. It is important during the early stages of 50S assembly. It makes multiple contacts with different domains of the 23S rRNA in the assembled 50S subunit and ribosome. In terms of biological role, forms part of the polypeptide exit tunnel. The chain is Large ribosomal subunit protein uL4 from Gluconacetobacter diazotrophicus (strain ATCC 49037 / DSM 5601 / CCUG 37298 / CIP 103539 / LMG 7603 / PAl5).